Consider the following 255-residue polypeptide: Small ribosomal subunit protein uS2 (255 aa).

Belongs to the universal ribosomal protein uS2 family.

The sequence is that of Small ribosomal subunit protein uS2 from Streptococcus uberis (strain ATCC BAA-854 / 0140J).